A 412-amino-acid polypeptide reads, in one-letter code: Maltoporin (412 aa).

The signal sequence occupies residues 1-22 (MKKVSVIAAAVAATLAAGSAFA).

It belongs to the porin LamB (TC 1.B.3) family. In terms of assembly, homotrimer formed of three 18-stranded antiparallel beta-barrels, containing three independent channels.

Its subcellular location is the cell outer membrane. The enzyme catalyses beta-maltose(in) = beta-maltose(out). Involved in the transport of maltose and maltodextrins. This is Maltoporin from Vibrio cholerae serotype O1 (strain ATCC 39315 / El Tor Inaba N16961).